The following is a 324-amino-acid chain: Olfactory receptor 2T2 (324 aa).

Topologically, residues 1-26 (MGMEGLLQNSTNFVLTGLITHPAFPG) are extracellular. N-linked (GlcNAc...) asparagine glycosylation is present at N9. Residues 27–50 (LLFAIVFSIFVVAITANLVMILLI) form a helical membrane-spanning segment. Residues 51-58 (HMDSRLHT) are Cytoplasmic-facing. A helical transmembrane segment spans residues 59–80 (PMYFLLSQLSIMDTIYICITVP). The Extracellular portion of the chain corresponds to 81-101 (KMLQDLLSKDKTISFLGCAVQ). A disulfide bond links C98 and C190. Residues 102-121 (IFLYLTLIGGEFFLLGLMAY) traverse the membrane as a helical segment. Residues 122-140 (DRYVAVCNPLRYPLLMNRR) are Cytoplasmic-facing. A helical membrane pass occupies residues 141–159 (VCLFMVVGSWVGGSLDGFM). Over 160–196 (LTPVTMSFPFCRSREINHFFCEIPAVLKLSCTDTSLY) the chain is Extracellular. The chain crosses the membrane as a helical span at residues 197–220 (ETLMYACCVLMLLIPLSVISVSYT). At 221–237 (HILLTVHRMNSAEGRRK) the chain is on the cytoplasmic side. A helical membrane pass occupies residues 238 to 260 (AFATCSSHIMVVSVFYGAAFYTN). The Extracellular portion of the chain corresponds to 261–273 (VLPHSYHTPEKDK). A helical transmembrane segment spans residues 274–293 (VVSAFYTILTPMLNPLIYSL). Topologically, residues 294–324 (RNKDVAAALRKVLGRCGSSQSIRVATVIRKG) are cytoplasmic.

It belongs to the G-protein coupled receptor 1 family.

It localises to the cell membrane. Functionally, odorant receptor. In Homo sapiens (Human), this protein is Olfactory receptor 2T2 (OR2T2).